Consider the following 263-residue polypeptide: Leucyl/phenylalanyl-tRNA--protein transferase (263 aa).

Belongs to the L/F-transferase family.

The protein resides in the cytoplasm. The enzyme catalyses N-terminal L-lysyl-[protein] + L-leucyl-tRNA(Leu) = N-terminal L-leucyl-L-lysyl-[protein] + tRNA(Leu) + H(+). The catalysed reaction is N-terminal L-arginyl-[protein] + L-leucyl-tRNA(Leu) = N-terminal L-leucyl-L-arginyl-[protein] + tRNA(Leu) + H(+). It carries out the reaction L-phenylalanyl-tRNA(Phe) + an N-terminal L-alpha-aminoacyl-[protein] = an N-terminal L-phenylalanyl-L-alpha-aminoacyl-[protein] + tRNA(Phe). Functionally, functions in the N-end rule pathway of protein degradation where it conjugates Leu, Phe and, less efficiently, Met from aminoacyl-tRNAs to the N-termini of proteins containing an N-terminal arginine or lysine. This is Leucyl/phenylalanyl-tRNA--protein transferase from Novosphingobium aromaticivorans (strain ATCC 700278 / DSM 12444 / CCUG 56034 / CIP 105152 / NBRC 16084 / F199).